Here is a 229-residue protein sequence, read N- to C-terminus: UPF0173 metal-dependent hydrolase RD1_1994 (229 aa).

It belongs to the UPF0173 family.

The chain is UPF0173 metal-dependent hydrolase RD1_1994 from Roseobacter denitrificans (strain ATCC 33942 / OCh 114) (Erythrobacter sp. (strain OCh 114)).